A 392-amino-acid chain; its full sequence is F-box only protein 5-A (392 aa).

A disordered region spans residues 1 to 21 (MMCGFASNQSPKKLSSKKSSA). Low complexity predominate over residues 7–20 (SNQSPKKLSSKKSS). Residues 197-244 (AELFHRDFKHLLTKILRHLSAMDLINVISVSTTWRKLLQKDNWAYNAY) form the F-box domain. The ZBR-type zinc-finger motif lies at 319–367 (SLKVCVDCGSPAKHDPCLHRAICTRESCKLDFCTRCSCKYHFSKSCLMS). Zn(2+) is bound by residues C323, C326, C341, C346, C351, C354, H359, and C364.

In terms of assembly, part of a SCF (SKP1-cullin-F-box) protein ligase complex. Interacts with btrc. Interacts with skp1. Interacts with cdc20. Interacts with pin1; stabilizes fbxo5 by preventing its association with btrc in an isomerization-dependent pathway; this interaction is present during G2 phase and prevents fbxo5 degradation. Interacts with plk1. Post-translationally, proteolysed; proteolysis is induced by both cyclin B-cdk1 and cyclin A-cdk1/2 complex through probable phosphorylation. Proteolysis is inhibited by pin1 during G2.

The protein localises to the nucleus. The protein resides in the cytoplasm. Its subcellular location is the cytoskeleton. It is found in the spindle. It localises to the microtubule organizing center. The protein localises to the centrosome. Its pathway is protein modification; protein ubiquitination. Functionally, regulates progression through early mitosis by inhibiting the anaphase promoting complex/cyclosome (APC). Binds to the APC activator cdc20 to prevent APC activation. Can also bind directly to the APC to inhibit substrate-binding. Required to arrest unfertilized eggs at metaphase of meiosis II, by preventing their release from metaphase of meiosis II, through inhibition of APC-dependent cyclin B destruction leading to stabilization of cyclin B-cdk1 complex activity. The protein is F-box only protein 5-A (fbxo5-a) of Xenopus laevis (African clawed frog).